We begin with the raw amino-acid sequence, 497 residues long: Cytochrome P450 monooxygenase cicH (497 aa).

A helical membrane pass occupies residues A2–F19. C439 is a heme binding site. The N-linked (GlcNAc...) asparagine glycan is linked to N443.

This sequence belongs to the cytochrome P450 family. Requires heme as cofactor.

The protein resides in the membrane. The protein operates within phytotoxin biosynthesis. Its function is as follows. Cytochrome P450 monooxygenase; part of the gene cluster that mediates the biosynthesis of cichorine, a phytotoxin active against knapweed, corn, and soybeans. The first step in the pathway is performed by the non-reducing polyketide synthase pkbA that condenses one acetyl-CoA starter unit with 3 malonyl-CoA units. PkbA also catalyzes one methylation step to produce 3-methylorsellinate. The nonribosomal peptide synthase-like protein cicB, the cytochrome P450 monooxygenase cicH and the O-methyltransferase cicE are involved in the conversion of 3-methylorsellinate into nidulol. CicB converts 3-methylorsellinate to a yet unidentified intermediate, cicH may play a ring-closing role for cichorine and cicE is plausibly responsible for the methylation of one of the phenol groups. The oxidoreductase cicC acts downstream with still unidentified enzymes to further convert nidulol into cichorine. This is Cytochrome P450 monooxygenase cicH from Emericella nidulans (strain FGSC A4 / ATCC 38163 / CBS 112.46 / NRRL 194 / M139) (Aspergillus nidulans).